The sequence spans 677 residues: Protein PALS1 (677 aa).

The interval Met-1–Glu-347 is required for the correct localization of PALS1 and PATJ at cell-cell contacts and the normal formation of tight junctions and adherens junctions. The disordered stretch occupies residues Glu-39 to Ser-81. The span at Ala-51 to Leu-76 shows a compositional bias: basic and acidic residues. 2 L27 domains span residues Ala-121–Ser-178 and Pro-180–Glu-236. The PDZ domain occupies Ile-258–Ala-338. Residues Glu-347–Glu-419 enclose the SH3 domain. The region spanning Lys-481–Asn-662 is the Guanylate kinase-like domain. Gly-488–Asn-495 serves as a coordination point for ATP. A disordered region spans residues Pro-506–Asn-526.

This sequence belongs to the MAGUK family. In terms of tissue distribution, expressed in the retina and in the neural tube.

The protein localises to the apical cell membrane. It localises to the cell junction. Its subcellular location is the tight junction. Plays a role in tight junction biogenesis and in the establishment of cell polarity in epithelial cells. Also involved in adherens junction biogenesis. Required for polarized epithelial organization, cell-cell adhesion and remodeling of myocardial cells during heart tube elongation during embryogenesis. Functions in cellular patterning of the retina and development of the retinal pigmented epithelium. Also required for embryo body axis specification. The sequence is that of Protein PALS1 (pals1a) from Danio rerio (Zebrafish).